The following is a 150-amino-acid chain: UPF0756 membrane protein NTHI1233 (150 aa).

4 consecutive transmembrane segments (helical) span residues 1–21 (MTLQ…LGVL), 52–72 (YGVK…LVSG), 81–101 (GFLS…AWLA), and 123–143 (IIGV…AGIL).

It belongs to the UPF0756 family.

It localises to the cell membrane. This is UPF0756 membrane protein NTHI1233 from Haemophilus influenzae (strain 86-028NP).